Consider the following 155-residue polypeptide: Large ribosomal subunit protein uL13 (155 aa).

It belongs to the universal ribosomal protein uL13 family. Part of the 50S ribosomal subunit.

This protein is one of the early assembly proteins of the 50S ribosomal subunit, although it is not seen to bind rRNA by itself. It is important during the early stages of 50S assembly. The chain is Large ribosomal subunit protein uL13 from Rickettsia typhi (strain ATCC VR-144 / Wilmington).